We begin with the raw amino-acid sequence, 162 residues long: CD-NTase-associated protein 7 (162 aa).

The segment at 138–162 (HSGLTQSGGREYSSNGYGMQRKDYN) is disordered. Residues 139 to 154 (SGLTQSGGREYSSNGY) are compositionally biased toward polar residues.

This sequence belongs to the HORMA family. HORMA1 subfamily. In terms of assembly, forms complexes with CdnC with 1:1 and 2:2 stoichimetry, and a 1:1:6 CdnC:Cap7:Cap6 complex.

Sensor protein of a CBASS antivirus system. CBASS (cyclic oligonucleotide-based antiphage signaling system) provides immunity against bacteriophage. The CD-NTase protein synthesizes cyclic nucleotides in response to infection; these serve as specific second messenger signals. The signals activate a diverse range of effectors, leading to bacterial cell death and thus abortive phage infection. A type III CBASS system. Expression of this CBASS system (Cap18-Cap6-Cap7-CdnC-CapW-Cap17) in a susceptible E.coli (strain MG1655) confers resistance to bacteriophage P1. The sensor protein for this CBASS system. Binds to a closure peptide, which allows it to activate CdnC for second messenger synthesis. This Escherichia coli (strain KTE188) protein is CD-NTase-associated protein 7.